Reading from the N-terminus, the 3176-residue chain is MSNGDWGQSQRPRGTGPMRGIRTMDVNAPGGGSGGSALRILGTASCNQAHCKFGRFAGIQCVSNCVLYLVKSFLAGRPLTSRPELDEVLDEGARLDALMRQSGILKGHEMAQLTDVPSSVVLRGGGRVHIYRSAEIFGLVLFPAQIANSAVVQSLAEVLHGSYNGVAQFILYICDIYAGGIIIETDGSFYLFDPHCQKDAAPGTPAHVRVSTYAHDILQYVGAPGAQYTCVHLYFLPEAFETEDPRIFMLEHYGVYDFYEANGSGFDLVGPELVSSDGEAAGTPDADSSPPVMLPFERRIIPYNLRPLPSRSFTSDSFPAARYSPAKTNSPPPSPASAAPASAAPASAAPASAAPASAAQASVAPASVAPASAAPASAAPDSAAPASSPPLFIPIPGLGHTPGVPAPSTPPRASGSAAPQTPKRKKGLGKDSPHKKPTSGRRLPLSSTTDTEDDQLPRPPVPPHRPPSAARLPPPVIPIPHQSPPASPTPRRAPVSTIAPSVTPSPRLPLQIPIPLPQAAPSNPEIPLTTPSPSPTAAAAPTATTLSPPPTQQQPLQSAAPAPSPPPTQQQPPQSAAPAPSPLLPQQQPPPSAAPAPSPLLPQQQPPPSAARAPSPLPPQQQPLPSATPAPPPAQQLPPSATTLEPEKNNPSAADRAGTEISPSPPFGQQPSFGDDASGGSGLVRYLSDLEEPFLSMSDSEEAESDLASDIPTTEDEDMFEDEVFSNSLESGSSAPTSPITLDTARSQYYQTTFDIETPEMDFVPLESNIARIAGHTYQEQAIVYDPASNREVPEADALSMIDYLLVTVVLEQGLIRSRDRSAVLNLLEFLKDWSGHLQVPTLDLEQLLTSELNIQNLANMLSENKGRAGEFHEHLAAKLEACLPSLATKDAVRVDAGAKMLAEIPQLAESDDGKFDLEAARRRLTDLLSGGDQEGEEGGGEPEDHSIYRGPHVDVPLVLDDESWKRLLSLAEAARTAVARQQAGVDEEDVRFLALLTAIEYGAPPAASVPPFVHNVAVRSKNAALHVRRCTADIRDKVASAASDYLSYLEDPSLPTVMDFDDLLTHLRHTCQIIASLPLLNIRYTSIEWDYRELLYLGTALSDMSGIPWPLERVEEDDPSIAPLPEFETVAKKQKELETTRENEKRLRTILDDIEAMLGLAGVASAPGAPISPASPSATPANHDNPEATPPLADTAALTIPVIEKYIANAGSIVGAAKNPTYIRLRDTIQQIVRSKKYLMNILKSITFYTIDNYIASFEESIDHLYRDLPVLDPEVQDGIDRILDPMVSEALHTFEMGNRLTLEPARLVALQNFATHSTLKETAAAVNLLPGLLAVYDATVTGQAPEDALRLLSGLQNQLSQTLIPGKLKKRFLSYLQKLKNNNNDQLRQKEVQAWRLEAEGFKPATEEQLEAFLDTAPNKELKRQYEKKLRQLMETGRKEKEKLREQEDKERRERRAREANEAWARIRKALGARPEPAPTSPDDWNTLLASLLPDNTDSAAAAAAAVARNTDILDSLTQILAAMLLGITRVRRERLRSLLVDDGGAAERMEAAEPGWFTDIETGPLARLDAWPATPAATAKEGGGGRGAEEAAGALFRARTAADAIRSALAQTRQALQSPDMKSAVVNTDLEAPYAEYERGLAGLLEKRRAAEAALTAIVSEYVDRTLPEATNDPGQANLPPPPTIPQATAPPRLASDLALWPKKPQLLTRRERDDLLQATGDFFSELLTEAEAAEVRALEEQVRESQTLMAKAHEMAASTRRGFHTALEAVLSRSRDEAPDDELRSLLPSPPKAPVQAPLEAALARAAAGNGSWPYRKSLAAAKWIRGICEAVRGLSEGALALAGGAGAWLNLAAAADGEIHELTRLLEVEGMAQNSMDGMEELRLALATLDPKRVAGGKETVADWKRRLSRLEAIIQEAQEESQLQGTLQDLVTQARGHTDPRQLKIVVEAARGLALGASAGSQYALLKDKLLRYASAKQSFLAFYETAQPTVFVKHPLTNNLPLLITISAPPTGWGNGAPTRRAQFLAAAGPAKYAGTLWLETESPCDPLNPAYVSADTQEPLNYIPVYHNFLEYVMPTVLENPEAFSLTPAGRPQAIGPPQDDQERRRRTLASVASARLSAAAADSYWDTWPDVESNAGELLREYVSAPKALMEDLADNPIVAMTLLAHASLIASRNHPPYPAPATDREVILLEQREIMALLVGTHPAYAAAFLGAPSFYAGLGLVSALARDGGLGDLLSDSVLTYRLVRSPASGRGGMPSTTRGSDDGEDARRLTRHRIAGPPTGFIFFQDAWEEMDTRAALWPHPEFLGLVHNQSTARARACMLLLARRCFAPEALQQLWHSLRPLEGPVAFQDYLRDFVKQAYTRGEELPRAEGLEVPRETPSSYGTVTGRALRNLMPYGTPITGPKRGSGDTIPVSVFEAAVAAAFLGRPLTLFVSSQYLFNLKTLGQVRVVAPLLYCDGHSEPFRSLVETISLNFLQDLDGYSESFEPEMSIFARQAVWLRELLTEARAAKPKEARPPTVAILANRKNIIWKCFTYRHNLPDVQFYFNAAGASRWPTDVLNPSFYEHEDPPLPVGYQLPPNPRNVQELFSGFPPRVGHGLVSGDGFQSADNTPASSDRLQQLGGGETDQGEEGSTTAESEASGPPSPQSPLLEKVAPGRPRDWLSPTSSPRDVTVTPGLAAPITLPGPRLMARPYFGAETRASESPDRSPGTSPRPWPKDSLELLPQPAPQQPPSSPWASEQGPIVYTLSPHSTPSTASGSQKKHTIQIPGLVPSQKPSYPPSAPYKPGQSTGGIAPTPSAASLTTFGLQPQDTQASSQDPPYGHSIMQREKKQQGGREEAAEIRPSATRLPTAVGLRPRAPVVAAGAAASATPAFDPGEAPSGLPIPQAPALGSGLAAPAHTPVGALAPSPQKTQAQRPQDAAALPTPTIKAVGARPVPKATGALAAGARPRGQPTAAPPSAASPPRVSLPVRSRQQQSPAIPLPPMHSGSEPGARPEVRLSQYRHAGPQTYTVQKEAPPSAASQLPKMPKCKDSMYYPPSGSARYPAPFQALSFSQSVASPAPSSDQTTLLWNTPSVVTQFLSIEDIIREVVTGGSTSGDLVVPSGSPSSLSTAAPEQDLRYSLTLSQASRVLSRFVSQLRRKLERSTHRLIADLERLKFLYL.

Residues 1–12 (MSNGDWGQSQRP) show a composition bias toward polar residues. Residues 1-28 (MSNGDWGQSQRPRGTGPMRGIRTMDVNA) are disordered. The segment at 1–268 (MSNGDWGQSQ…YEANGSGFDL (268 aa)) is deubiquitination activity. The Peptidase C76 domain maps to 41-258 (LGTASCNQAH…MLEHYGVYDF (218 aa)). Residues cysteine 61, aspartate 193, and histidine 195 contribute to the active site. Residues 319–342 (PAARYSPAKTNSPPPSPASAAPAS) form a disordered region. A run of 5 repeats spans residues 335–339 (PASAA), 340–344 (PASAA), 345–349 (PASAA), 350–354 (PASAA), and 355–359 (PASAA). The interval 335–384 (PASAAPASAAPASAAPASAAPASAAQASVAPASVAPASAAPASAAPDSAA) is 10 X 5 AA approximate repeats of P-A-S-A-A. Residues 360–364 (QASVA) form a 6; approximate repeat. The 7; approximate repeat unit spans residues 365–369 (PASVA). 2 tandem repeats follow at residues 370-374 (PASAA) and 375-379 (PASAA). Positions 376–386 (ASAAPDSAAPA) are enriched in low complexity. Disordered stretches follow at residues 376 to 683 (ASAA…GSGL), 928 to 950 (LLSG…SIYR), 1170 to 1193 (APIS…TPPL), 1435 to 1461 (LMET…RARE), 2610 to 3008 (GLVS…PGAR), and 3023 to 3043 (TYTV…KMPK). The stretch at 380-384 (PDSAA) is one 10; approximate repeat. The span at 457-488 (PRPPVPPHRPPSAARLPPPVIPIPHQSPPASP) shows a compositional bias: pro residues. A compositionally biased stretch (low complexity) spans 519–546 (AAPSNPEIPLTTPSPSPTAAAAPTATTL). The span at 579–636 (APSPLLPQQQPPPSAAPAPSPLLPQQQPPPSAARAPSPLPPQQQPLPSATPAPPPAQQ) shows a compositional bias: pro residues. The segment at 581–611 (SPLLPQQQPPPSAAPAPSPLLPQQQPPPSAA) is interaction with inner tegument protein. Positions 1170 to 1182 (APISPASPSATPA) are enriched in low complexity. A compositionally biased stretch (polar residues) spans 2619–2630 (SADNTPASSDRL). The span at 2643 to 2654 (EGSTTAESEASG) shows a compositional bias: low complexity. A compositionally biased stretch (pro residues) spans 2738 to 2747 (QPAPQQPPSS). Polar residues-rich tracts occupy residues 2761–2772 (SPHSTPSTASGS) and 2811–2831 (SAAS…SSQD). Over residues 2839–2854 (MQREKKQQGGREEAAE) the composition is skewed to basic and acidic residues. 2 stretches are compositionally biased toward low complexity: residues 2872 to 2886 (APVV…ATPA) and 2901 to 2912 (APALGSGLAAPA).

It belongs to the herpesviridae large tegument protein family. Interacts with host CUL1 and CUL4A; these interactions inhibit the E3 ligase activity of cullins. Interacts with inner tegument protein. Interacts with capsid vertex specific component CVC2. Interacts with the major capsid protein/MCP. Interacts with host TRIM25 and YWHAZ.

It localises to the virion tegument. Its subcellular location is the host cytoplasm. The protein resides in the host nucleus. The enzyme catalyses Thiol-dependent hydrolysis of ester, thioester, amide, peptide and isopeptide bonds formed by the C-terminal Gly of ubiquitin (a 76-residue protein attached to proteins as an intracellular targeting signal).. Large tegument protein that plays multiple roles in the viral cycle. During viral entry, remains associated with the capsid while most of the tegument is detached and participates in the capsid transport toward the host nucleus. Plays a role in the routing of the capsid at the nuclear pore complex and subsequent uncoating. Within the host nucleus, acts as a deneddylase and promotes the degradation of nuclear CRLs (cullin-RING ubiquitin ligases) and thereby stabilizes nuclear CRL substrates, while cytoplasmic CRLs remain unaffected. These modifications prevent host cell cycle S-phase progression and create a favorable environment allowing efficient viral genome replication. Participates later in the secondary envelopment of capsids. Indeed, plays a linker role for the association of the outer viral tegument to the capsids together with the inner tegument protein. Counteracts host TLR-mediated NF-kappa-B activation through both MYD88 and TICAM1-dependent pathways by interfering with 'Lys-63'- and 'Lys-48'-linked ubiquitination of signaling intermediates such as TRAF6 and IKBKG. Inhibits type I interferon production by forming a tri-molecular complex with host TRIM25 and 14-3-3 thereby promoting TRIM25 autoubiquitination and sequestration of the ligase into inactive protein aggregates. In turn, host RIGI is recruited to the complex but ubiquitination is severely impaired leading to inhibition of the pathway. Also catalyzes the removal of 'Lys-48'- and 'Lys-63'-linked ubiquitin chains on host TBK1 and STING1 suppressing cGAS-STING signaling in addition to the RIGI-MAVS pathway. Inhibits selective autophagy by deubiquitinating host SQSTM1. In turn, decreased SQSTM1 ubiquitination fails to recruit LC3 to SQSTM1-positive aggregates. In the host nucleus, deubiquitinates topoisomerase II subunits TOP2A and TOP2B thereby stabilizing SUMOylated TOP2 which halts the DNA damage response to TOP2-induced double strand DNA breaks and promotes cell survival. The polypeptide is Large tegument protein deneddylase (Homo sapiens (Human)).